Consider the following 197-residue polypeptide: Protein-S-isoprenylcysteine O-methyltransferase B (197 aa).

The next 3 helical transmembrane spans lie at 16-36, 52-72, and 81-101; these read MFLA…AIHG, ALAM…FPGL, and FGLT…ITAG. Residues 116–119, Tyr-124, and 129–132 contribute to the S-adenosyl-L-methionine site; these read HKLV and HPSY. A helical transmembrane segment spans residues 140–160; sequence VGTQVMLCNPISAIAFAVVVW. Arg-166 serves as a coordination point for substrate. Glu-170 contributes to the S-adenosyl-L-methionine binding site.

It belongs to the class VI-like SAM-binding methyltransferase superfamily. Isoprenylcysteine carboxyl methyltransferase family. It depends on Zn(2+) as a cofactor. As to expression, expressed in flowers, stems, leaves, roots and siliques. Detected in apices and vascular tissues of leaves and roots, in the stigma and in the filaments and anthers of stamen. Not found in petioles or hypocotyls.

It localises to the endoplasmic reticulum membrane. The catalysed reaction is [protein]-C-terminal S-[(2E,6E)-farnesyl]-L-cysteine + S-adenosyl-L-methionine = [protein]-C-terminal S-[(2E,6E)-farnesyl]-L-cysteine methyl ester + S-adenosyl-L-homocysteine. Its activity is regulated as follows. Inhibited by farnesylthioacetic acid (FTAA) and N-acetyl-S-trans, trans-farnesyl-l-cysteine (AFC). Its function is as follows. Catalyzes the post-translational methylation of isoprenylated C-terminal cysteine residues, resulting in the modulation of the function of prenylated proteins. Involved in negative regulation of abscisic acid signaling. Carboxyl methylation is a reversible and potentially regulated step in the post-translational modification of prenylated proteins. This Arabidopsis thaliana (Mouse-ear cress) protein is Protein-S-isoprenylcysteine O-methyltransferase B.